Reading from the N-terminus, the 329-residue chain is 4-hydroxythreonine-4-phosphate dehydrogenase (329 aa).

2 residues coordinate substrate: H136 and T137. Residues H166, H211, and H266 each coordinate a divalent metal cation. Residues K274, N283, and R292 each coordinate substrate.

Belongs to the PdxA family. As to quaternary structure, homodimer. It depends on Zn(2+) as a cofactor. Mg(2+) is required as a cofactor. Requires Co(2+) as cofactor.

The protein resides in the cytoplasm. The catalysed reaction is 4-(phosphooxy)-L-threonine + NAD(+) = 3-amino-2-oxopropyl phosphate + CO2 + NADH. The protein operates within cofactor biosynthesis; pyridoxine 5'-phosphate biosynthesis; pyridoxine 5'-phosphate from D-erythrose 4-phosphate: step 4/5. Its function is as follows. Catalyzes the NAD(P)-dependent oxidation of 4-(phosphooxy)-L-threonine (HTP) into 2-amino-3-oxo-4-(phosphooxy)butyric acid which spontaneously decarboxylates to form 3-amino-2-oxopropyl phosphate (AHAP). The chain is 4-hydroxythreonine-4-phosphate dehydrogenase from Shigella boydii serotype 18 (strain CDC 3083-94 / BS512).